The primary structure comprises 72 residues: Translation initiation factor IF-1 (72 aa).

Residues M1–K72 enclose the S1-like domain.

This sequence belongs to the IF-1 family. As to quaternary structure, component of the 30S ribosomal translation pre-initiation complex which assembles on the 30S ribosome in the order IF-2 and IF-3, IF-1 and N-formylmethionyl-tRNA(fMet); mRNA recruitment can occur at any time during PIC assembly.

The protein resides in the cytoplasm. Its function is as follows. One of the essential components for the initiation of protein synthesis. Stabilizes the binding of IF-2 and IF-3 on the 30S subunit to which N-formylmethionyl-tRNA(fMet) subsequently binds. Helps modulate mRNA selection, yielding the 30S pre-initiation complex (PIC). Upon addition of the 50S ribosomal subunit IF-1, IF-2 and IF-3 are released leaving the mature 70S translation initiation complex. This is Translation initiation factor IF-1 from Hyphomonas neptunium (strain ATCC 15444).